The sequence spans 43 residues: DEEVGCFPNVCKNDGNCSIETSTGMTRCQCLEGYTGHVCENPL.

Positions 2–40 (EEVGCFPNVCKNDGNCSIETSTGMTRCQCLEGYTGHVCE) constitute an EGF-like domain. 3 disulfides stabilise this stretch: Cys6/Cys28, Cys11/Cys30, and Cys17/Cys39.

In terms of tissue distribution, expressed by the venom duct.

It is found in the secreted. This is Augerpeptide hhe9.2 from Hastula hectica (Sea snail).